Consider the following 219-residue polypeptide: Interleukin-12 subunit alpha (219 aa).

The N-terminal stretch at 1–22 (MCPARSLLLVATLVLLDYLSLA) is a signal peptide. N24, N93, and N107 each carry an N-linked (GlcNAc...) asparagine glycan. Disulfide bonds link C37–C110, C64–C196, and C85–C123.

The protein belongs to the IL-6 superfamily. In terms of assembly, heterodimer with IL12B; disulfide-linked. This heterodimer is known as interleukin IL-12. Heterodimer with EBI3/IL27B; not disulfide-linked. This heterodimer is known as interleukin IL-35. Interacts with NBR1; this interaction promotes IL-12 secretion.

The protein resides in the secreted. Heterodimerizes with IL12B to form the IL-12 cytokine or with EBI3/IL27B to form the IL-35 cytokine. IL-12 is primarily produced by professional antigen-presenting cells (APCs) such as B-cells and dendritic cells (DCs) as well as macrophages and granulocytes and regulates T-cell and natural killer-cell responses, induces the production of interferon-gamma (IFN-gamma), favors the differentiation of T-helper 1 (Th1) cells and is an important link between innate resistance and adaptive immunity. Mechanistically, exerts its biological effects through a receptor composed of IL12R1 and IL12R2 subunits. Binding to the receptor results in the rapid tyrosine phosphorylation of a number of cellular substrates including the JAK family kinases TYK2 and JAK2. In turn, recruited STAT4 gets phosphorylated and translocates to the nucleus where it regulates cytokine/growth factor responsive genes. As part of IL-35, plays essential roles in maintaining the immune homeostasis of the liver microenvironment and also functions as an immune-suppressive cytokine. Mediates biological events through unconventional receptors composed of IL12RB2 and gp130/IL6ST heterodimers or homodimers. Signaling requires the transcription factors STAT1 and STAT4, which form a unique heterodimer that binds to distinct DNA sites. The sequence is that of Interleukin-12 subunit alpha (IL12A) from Macaca mulatta (Rhesus macaque).